The chain runs to 451 residues: Phosphoglucosamine mutase (451 aa).

The active-site Phosphoserine intermediate is the S102. Residues S102, D243, D245, and D247 each coordinate Mg(2+). A Phosphoserine modification is found at S102.

It belongs to the phosphohexose mutase family. Mg(2+) serves as cofactor. Activated by phosphorylation.

It carries out the reaction alpha-D-glucosamine 1-phosphate = D-glucosamine 6-phosphate. Catalyzes the conversion of glucosamine-6-phosphate to glucosamine-1-phosphate. This Chelativorans sp. (strain BNC1) protein is Phosphoglucosamine mutase.